A 363-amino-acid polypeptide reads, in one-letter code: Pyrimidine monooxygenase RutA (363 aa).

Residues 49–50, Asn-115, Glu-124, 140–141, and Ser-190 contribute to the FMN site; these read IK and RY.

Belongs to the NtaA/SnaA/DszA monooxygenase family. RutA subfamily.

It carries out the reaction uracil + FMNH2 + NADH + O2 = (Z)-3-ureidoacrylate + FMN + NAD(+) + H2O + H(+). The catalysed reaction is thymine + FMNH2 + NADH + O2 = (Z)-2-methylureidoacrylate + FMN + NAD(+) + H2O + H(+). Catalyzes the pyrimidine ring opening between N-3 and C-4 by an unusual flavin hydroperoxide-catalyzed mechanism, adding oxygen atoms in the process to yield ureidoacrylate peracid, that immediately reacts with FMN forming ureidoacrylate and FMN-N(5)-oxide. The FMN-N(5)-oxide reacts spontaneously with NADH to produce FMN. Requires the flavin reductase RutF to regenerate FMN in vivo. In Escherichia coli O127:H6 (strain E2348/69 / EPEC), this protein is Pyrimidine monooxygenase RutA.